The following is a 185-amino-acid chain: Threonylcarbamoyl-AMP synthase (185 aa).

Residues 1–185 (MDNFEQVLNA…AKTSQILRQG (185 aa)) form the YrdC-like domain. Residues 163–185 (ETSGRDKPSEIRDAKTSQILRQG) form a disordered region. Residues 164 to 177 (TSGRDKPSEIRDAK) are compositionally biased toward basic and acidic residues.

This sequence belongs to the SUA5 family. TsaC subfamily.

It localises to the cytoplasm. It carries out the reaction L-threonine + hydrogencarbonate + ATP = L-threonylcarbamoyladenylate + diphosphate + H2O. In terms of biological role, required for the formation of a threonylcarbamoyl group on adenosine at position 37 (t(6)A37) in tRNAs that read codons beginning with adenine. Catalyzes the conversion of L-threonine, HCO(3)(-)/CO(2) and ATP to give threonylcarbamoyl-AMP (TC-AMP) as the acyladenylate intermediate, with the release of diphosphate. This is Threonylcarbamoyl-AMP synthase from Vibrio parahaemolyticus serotype O3:K6 (strain RIMD 2210633).